Here is a 409-residue protein sequence, read N- to C-terminus: Arginine deiminase (409 aa).

Cys399 (amidino-cysteine intermediate) is an active-site residue.

This sequence belongs to the arginine deiminase family.

It is found in the cytoplasm. The enzyme catalyses L-arginine + H2O = L-citrulline + NH4(+). Its pathway is amino-acid degradation; L-arginine degradation via ADI pathway; carbamoyl phosphate from L-arginine: step 1/2. This chain is Arginine deiminase, found in Borrelia garinii subsp. bavariensis (strain ATCC BAA-2496 / DSM 23469 / PBi) (Borreliella bavariensis).